The sequence spans 253 residues: 3-deoxy-manno-octulosonate cytidylyltransferase (253 aa).

The protein belongs to the KdsB family.

It is found in the cytoplasm. The catalysed reaction is 3-deoxy-alpha-D-manno-oct-2-ulosonate + CTP = CMP-3-deoxy-beta-D-manno-octulosonate + diphosphate. It participates in nucleotide-sugar biosynthesis; CMP-3-deoxy-D-manno-octulosonate biosynthesis; CMP-3-deoxy-D-manno-octulosonate from 3-deoxy-D-manno-octulosonate and CTP: step 1/1. Its pathway is bacterial outer membrane biogenesis; lipopolysaccharide biosynthesis. Functionally, activates KDO (a required 8-carbon sugar) for incorporation into bacterial lipopolysaccharide in Gram-negative bacteria. This chain is 3-deoxy-manno-octulosonate cytidylyltransferase, found in Haemophilus ducreyi (strain 35000HP / ATCC 700724).